Consider the following 332-residue polypeptide: L-lactate dehydrogenase A chain (332 aa).

NAD(+) contacts are provided by residues 29–57 and R99; that span reads GAVG…VEDK. Residues R106, N138, and R169 each coordinate substrate. N138 is a binding site for NAD(+). Catalysis depends on H193, which acts as the Proton acceptor. T248 lines the substrate pocket.

Belongs to the LDH/MDH superfamily. LDH family. As to quaternary structure, homotetramer.

The protein localises to the cytoplasm. The enzyme catalyses (S)-lactate + NAD(+) = pyruvate + NADH + H(+). It participates in fermentation; pyruvate fermentation to lactate; (S)-lactate from pyruvate: step 1/1. Its function is as follows. Interconverts simultaneously and stereospecifically pyruvate and lactate with concomitant interconversion of NADH and NAD(+). The polypeptide is L-lactate dehydrogenase A chain (LDHA) (Caiman crocodilus apaporiensis (Rio Apaporis caiman)).